We begin with the raw amino-acid sequence, 375 residues long: UPF0612 protein C569.003 (375 aa).

Belongs to the UPF0612 family.

Its subcellular location is the cytoplasm. In Schizosaccharomyces pombe (strain 972 / ATCC 24843) (Fission yeast), this protein is UPF0612 protein C569.003.